We begin with the raw amino-acid sequence, 136 residues long: Gilles de la Tourette syndrome chromosomal region candidate gene 1 protein (136 aa).

Residues 73 to 93 traverse the membrane as a helical segment; the sequence is AICMEVFLFLWFIAPIYACVC.

The protein localises to the membrane. In Homo sapiens (Human), this protein is Gilles de la Tourette syndrome chromosomal region candidate gene 1 protein (GTSCR1).